Reading from the N-terminus, the 218-residue chain is Thiopurine S-methyltransferase (218 aa).

The S-adenosyl-L-methionine site is built by Trp-10, Leu-45, Glu-66, and Arg-123.

Belongs to the class I-like SAM-binding methyltransferase superfamily. TPMT family.

It is found in the cytoplasm. The enzyme catalyses S-adenosyl-L-methionine + a thiopurine = S-adenosyl-L-homocysteine + a thiopurine S-methylether.. The chain is Thiopurine S-methyltransferase from Shewanella sp. (strain MR-7).